Reading from the N-terminus, the 263-residue chain is Small ribosomal subunit protein uS3 (263 aa).

The 69-residue stretch at 39–107 (VREYLKKKLK…PVHVNIEEIR (69 aa)) folds into the KH type-2 domain. The interval 211–263 (GELPPEAATPREEERRPRRAPRGDRPDGARTGRPGGRGRGPRKADAAPAPEGE) is disordered. Positions 219 to 240 (TPREEERRPRRAPRGDRPDGAR) are enriched in basic and acidic residues.

It belongs to the universal ribosomal protein uS3 family. In terms of assembly, part of the 30S ribosomal subunit. Forms a tight complex with proteins S10 and S14.

Its function is as follows. Binds the lower part of the 30S subunit head. Binds mRNA in the 70S ribosome, positioning it for translation. This Bordetella pertussis (strain Tohama I / ATCC BAA-589 / NCTC 13251) protein is Small ribosomal subunit protein uS3.